Here is a 300-residue protein sequence, read N- to C-terminus: Ribosomal protein bS6--L-glutamate ligase (300 aa).

One can recognise an ATP-grasp domain in the interval 104 to 287 (MQLLARQGID…IAGKMIRWIE (184 aa)). Residues Lys141, 178–179 (EY), Asp187, and 211–213 (RSN) contribute to the ATP site. Positions 248, 260, and 262 each coordinate Mg(2+). Mn(2+) is bound by residues Asp248, Glu260, and Asn262.

It belongs to the RimK family. Mg(2+) serves as cofactor. It depends on Mn(2+) as a cofactor.

Functionally, an L-glutamate ligase that catalyzes the ATP-dependent post-translational addition of glutamate residues to the C-terminus of ribosomal protein bS6 (RpsF). Is also able to catalyze the synthesis of poly-alpha-glutamate in vitro, via ATP hydrolysis from unprotected glutamate as substrate. The number of glutamate residues added to either RpsF or to poly-alpha-glutamate changes with pH. In Escherichia coli O7:K1 (strain IAI39 / ExPEC), this protein is Ribosomal protein bS6--L-glutamate ligase.